The following is a 793-amino-acid chain: Putative potassium transporter 12 (793 aa).

Topologically, residues 1-54 (MASISDSETTNHGSIWDLDQNLDQPMDEEASRLKNMYTEKKFSSILLLRLAFQS) are cytoplasmic. Residues 55 to 75 (LGVVFGDLGTSPLYVFYNIFP) traverse the membrane as a helical segment. Residues 76 to 87 (HGVDDDEDVIGA) are Extracellular-facing. Residues 88–108 (LSLIIYTLTLIPLMKYVFVVL) form a helical membrane-spanning segment. Over 109–175 (RANDNGQGGT…EGHVYKKNCL (67 aa)) the chain is Cytoplasmic. A helical transmembrane segment spans residues 176-196 (LILVLIGTCTAIGDGILTPAI). Residues 197–215 (SVLSASGGIRVQNQKMSTD) lie on the Extracellular side of the membrane. The chain crosses the membrane as a helical span at residues 216-236 (VVVVVAVIILIGLFSMQHYGT). The Cytoplasmic portion of the chain corresponds to 237–238 (DK). A helical membrane pass occupies residues 239–259 (VGWLFAPIVLLWFILIGTIGA). Topologically, residues 260 to 289 (LNIHKYNSSVLKAYNPVYIYRYFRRGKSES) are extracellular. The N-linked (GlcNAc...) asparagine glycan is linked to asparagine 266. A helical membrane pass occupies residues 290-310 (WTSLGGIMLSITGTEALYADL). Residues 311–315 (CHFPV) lie on the Cytoplasmic side of the membrane. A helical membrane pass occupies residues 316–338 (LAIQIAFTLVVFPCLLLAYTGQA). The Extracellular portion of the chain corresponds to 339–359 (AYIISNKDHVVDAFYRSIPDT). The helical transmembrane segment at 360 to 380 (IYWPVFIIATLAAIVASQATI) threads the bilayer. Topologically, residues 381 to 411 (SATYSIIKQALALGCFPRVSVVHTSKKFLGQ) are cytoplasmic. The helical transmembrane segment at 412–432 (IYIPDINWVLMILCIAVTAGF) threads the bilayer. The Extracellular segment spans residues 433–444 (KNQSQIGNAYGT). N-linked (GlcNAc...) asparagine glycosylation occurs at asparagine 434. Residues 445–465 (AVVIVMLVTTFLMVPIMLLVW) form a helical membrane-spanning segment. Topologically, residues 466–468 (KSH) are cytoplasmic. The chain crosses the membrane as a helical span at residues 469–489 (WILVVIFIVLSLMVELPYFTA). Over 490–496 (CINKVDQ) the chain is Extracellular. A helical transmembrane segment spans residues 497–517 (GGWVPLVVATTCFIIMYVWHF). The Cytoplasmic portion of the chain corresponds to 518–793 (CTVKRYEFEM…LLNVGQIYYI (276 aa)).

This sequence belongs to the HAK/KUP transporter (TC 2.A.72.3) family.

The protein localises to the membrane. Its function is as follows. High-affinity potassium transporter. The protein is Putative potassium transporter 12 (HAK12) of Oryza sativa subsp. japonica (Rice).